Here is a 461-residue protein sequence, read N- to C-terminus: Siroheme synthase (461 aa).

The precorrin-2 dehydrogenase /sirohydrochlorin ferrochelatase stretch occupies residues 1-204 (MRYLPLFVYL…GNFRKANRVI (204 aa)). NAD(+) is bound by residues 22–23 (IV) and 43–44 (KT). A Phosphoserine modification is found at Ser-128. The tract at residues 218–461 (GSVSLVGAGP…HNEISWFGNG (244 aa)) is uroporphyrinogen-III C-methyltransferase. Position 227 (Pro-227) interacts with S-adenosyl-L-methionine. Catalysis depends on Asp-250, which acts as the Proton acceptor. The active-site Proton donor is the Lys-272. Residues 303 to 305 (GGD), Ile-308, Met-386, and Gly-415 contribute to the S-adenosyl-L-methionine site.

This sequence in the N-terminal section; belongs to the precorrin-2 dehydrogenase / sirohydrochlorin ferrochelatase family. The protein in the C-terminal section; belongs to the precorrin methyltransferase family.

It catalyses the reaction uroporphyrinogen III + 2 S-adenosyl-L-methionine = precorrin-2 + 2 S-adenosyl-L-homocysteine + H(+). The enzyme catalyses precorrin-2 + NAD(+) = sirohydrochlorin + NADH + 2 H(+). The catalysed reaction is siroheme + 2 H(+) = sirohydrochlorin + Fe(2+). Its pathway is cofactor biosynthesis; adenosylcobalamin biosynthesis; precorrin-2 from uroporphyrinogen III: step 1/1. It participates in cofactor biosynthesis; adenosylcobalamin biosynthesis; sirohydrochlorin from precorrin-2: step 1/1. It functions in the pathway porphyrin-containing compound metabolism; siroheme biosynthesis; precorrin-2 from uroporphyrinogen III: step 1/1. The protein operates within porphyrin-containing compound metabolism; siroheme biosynthesis; siroheme from sirohydrochlorin: step 1/1. Its pathway is porphyrin-containing compound metabolism; siroheme biosynthesis; sirohydrochlorin from precorrin-2: step 1/1. In terms of biological role, multifunctional enzyme that catalyzes the SAM-dependent methylations of uroporphyrinogen III at position C-2 and C-7 to form precorrin-2 via precorrin-1. Then it catalyzes the NAD-dependent ring dehydrogenation of precorrin-2 to yield sirohydrochlorin. Finally, it catalyzes the ferrochelation of sirohydrochlorin to yield siroheme. The sequence is that of Siroheme synthase from Blochmanniella floridana.